The primary structure comprises 135 residues: Basic phospholipase A2 6 (135 aa).

Intrachain disulfides connect C28/C87, C42/C134, C44/C60, C59/C115, C66/C108, C76/C101, and C94/C106. Ca(2+) is bound by residues Y43, G45, and G47. Residue H63 is part of the active site. D64 lines the Ca(2+) pocket. The active site involves D109.

This sequence belongs to the phospholipase A2 family. Group I subfamily. D49 sub-subfamily. Ca(2+) is required as a cofactor. Expressed by the venom gland.

It localises to the secreted. It catalyses the reaction a 1,2-diacyl-sn-glycero-3-phosphocholine + H2O = a 1-acyl-sn-glycero-3-phosphocholine + a fatty acid + H(+). Functionally, snake venom phospholipase A2 (PLA2) that inhibits neuromuscular transmission by blocking acetylcholine release from the nerve termini. PLA2 catalyzes the calcium-dependent hydrolysis of the 2-acyl groups in 3-sn-phosphoglycerides. Very weakly suppress the acetylcholine (ACh)-evoked current mediated by alpha-7-similar nAChRs in L.stagnalis neurons. The polypeptide is Basic phospholipase A2 6 (Bungarus fasciatus (Banded krait)).